A 225-amino-acid polypeptide reads, in one-letter code: Ribonuclease 3 (225 aa).

One can recognise an RNase III domain in the interval 2–128 (LSTLIKKLKI…LFGAIYLDLG (127 aa)). Position 43 (glutamate 43) interacts with Mg(2+). Aspartate 47 is a catalytic residue. Residues asparagine 114 and glutamate 117 each coordinate Mg(2+). The active site involves glutamate 117. Residues 152-220 (DFKTQLQELV…ARYVLNILSK (69 aa)) form the DRBM domain.

Belongs to the ribonuclease III family. As to quaternary structure, homodimer. Mg(2+) serves as cofactor.

It localises to the cytoplasm. It catalyses the reaction Endonucleolytic cleavage to 5'-phosphomonoester.. Digests double-stranded RNA. Involved in the processing of primary rRNA transcript to yield the immediate precursors to the large and small rRNAs (23S and 16S). Processes some mRNAs, and tRNAs when they are encoded in the rRNA operon. Processes pre-crRNA and tracrRNA of type II CRISPR loci if present in the organism. The polypeptide is Ribonuclease 3 (Phytoplasma mali (strain AT)).